Here is a 103-residue protein sequence, read N- to C-terminus: High-potential iron-sulfur protein (103 aa).

The N-terminal stretch at 1 to 28 is a signal peptide; that stretch reads MSNRRLFLKSIPIMAAAGAVGMAGLARA. [4Fe-4S] cluster is bound by residues C66, C69, C82, and C96.

Belongs to the high-potential iron-sulfur protein (HiPIP) family. In terms of assembly, homodimer.

The protein localises to the periplasm. In terms of biological role, specific class of high-redox-potential 4Fe-4S ferredoxins. Functions in anaerobic electron transport in most purple and in some other photosynthetic bacteria and in at least one genus (Paracoccus) of halophilic, denitrifying bacteria. In Ralstonia nicotianae (strain ATCC BAA-1114 / GMI1000) (Ralstonia solanacearum), this protein is High-potential iron-sulfur protein (hip).